Reading from the N-terminus, the 249-residue chain is Ribonuclease PH (249 aa).

Residues arginine 90 and 128–130 (GTR) each bind phosphate.

It belongs to the RNase PH family. As to quaternary structure, homohexameric ring arranged as a trimer of dimers.

The catalysed reaction is tRNA(n+1) + phosphate = tRNA(n) + a ribonucleoside 5'-diphosphate. Functionally, phosphorolytic 3'-5' exoribonuclease that plays an important role in tRNA 3'-end maturation. Removes nucleotide residues following the 3'-CCA terminus of tRNAs; can also add nucleotides to the ends of RNA molecules by using nucleoside diphosphates as substrates, but this may not be physiologically important. Probably plays a role in initiation of 16S rRNA degradation (leading to ribosome degradation) during starvation. In Parasynechococcus marenigrum (strain WH8102), this protein is Ribonuclease PH.